Here is a 580-residue protein sequence, read N- to C-terminus: Microcin-J25 export ATP-binding/permease protein McjD (580 aa).

The next 6 membrane-spanning stretches (helical) occupy residues F25 to I45, V66 to F86, V143 to S163, W167 to L187, A261 to V281, and F286 to L306. Positions F25–Q312 constitute an ABC transmembrane type-1 domain. The ABC transporter domain maps to L345–V578. G378–S385 is an ATP binding site.

This sequence belongs to the ABC transporter superfamily. As to quaternary structure, homodimer.

It localises to the cell inner membrane. Functionally, is able to protect a cell, which harbors the plasmid pTUC100 encoding microcin J25, against microcin J25. Is required for microcin J25 export out of the producing cells. The sequence is that of Microcin-J25 export ATP-binding/permease protein McjD (mcjD) from Escherichia coli.